We begin with the raw amino-acid sequence, 637 residues long: Chaperone protein HtpG (637 aa).

The a; substrate-binding stretch occupies residues 1 to 338; sequence MMELKMHNVK…SPDLPLNISR (338 aa). Residues 339-558 form a b region; that stretch reads ETLQNNRVVE…EGAMDLRMER (220 aa). A disordered region spans residues 493-512; sequence KFSPEEKDKENKSDEERAEG. The segment at 559–637 is c; sequence FLREQNQLNY…LNNLLGKVII (79 aa).

The protein belongs to the heat shock protein 90 family. In terms of assembly, homodimer.

It is found in the cytoplasm. Functionally, molecular chaperone. Has ATPase activity. The protein is Chaperone protein HtpG of Wolbachia sp. subsp. Brugia malayi (strain TRS).